A 311-amino-acid polypeptide reads, in one-letter code: Serine/threonine-protein phosphatase PP1-1 (311 aa).

4 residues coordinate Mn(2+): aspartate 53, histidine 55, aspartate 82, and asparagine 114. The active-site Proton donor is histidine 115. The Mn(2+) site is built by histidine 164 and histidine 238.

The protein belongs to the PPP phosphatase family. PP-6 (PP-V) subfamily. As to quaternary structure, inactivated in a complex with phosphatase methylesterase PPE1 (PP2Ai). Interacts with phosphatase 2A activator RRD1, which can reactivate PP2Ai by dissociating the catalytic subunit from the complex. Forms a ternary complex with RRD1-TAP42. Mn(2+) serves as cofactor.

Its subcellular location is the cytoplasm. The catalysed reaction is O-phospho-L-seryl-[protein] + H2O = L-seryl-[protein] + phosphate. It carries out the reaction O-phospho-L-threonyl-[protein] + H2O = L-threonyl-[protein] + phosphate. Involved in the dephosphorylation of the large subunit of RNA polymerase II. Is required in late G1 for normal G1 cyclin expression, bud initiation and expression of certain genes that are periodically expressed during late G1. Associates with the SAP proteins in a cell cycle-dependent manner. This chain is Serine/threonine-protein phosphatase PP1-1 (SIT4), found in Saccharomyces cerevisiae (strain ATCC 204508 / S288c) (Baker's yeast).